A 253-amino-acid polypeptide reads, in one-letter code: MGRKFFVGGNWKCNGTVEQVEAIVQTLNAGQIVSPDVVEVVVSPPYVFLPIVKAKLRPEIQVAAQNCWVKKGGAFTGEVSAEMLANLGVPWVILGHSERRSLLGESSEFVGEKVAYALAQGLKVIACVGETLEQREAGSTMEVVAEQTKAIAGKIKDWSNGVVAYEPVWAIGTGKVATPAQAQEVHANLRDWLKTNVSPEVAESTRIIYGGSVTGASCKELAAQADVDGFLVGGASLKPEFIDIINAAAVKSA.

Substrate-binding residues include Asn-10 and Lys-12. The Electrophile role is filled by His-96. Residue Glu-166 is the Proton acceptor of the active site.

Belongs to the triosephosphate isomerase family. As to quaternary structure, homodimer. As to expression, starchy endosperm.

It localises to the cytoplasm. It carries out the reaction D-glyceraldehyde 3-phosphate = dihydroxyacetone phosphate. It functions in the pathway carbohydrate biosynthesis; gluconeogenesis. Its pathway is carbohydrate degradation; glycolysis; D-glyceraldehyde 3-phosphate from glycerone phosphate: step 1/1. This chain is Triosephosphate isomerase, cytosolic, found in Hordeum vulgare (Barley).